The sequence spans 532 residues: Autophagy-related protein 21 (532 aa).

WD repeat units lie at residues 265 to 310 (AHDS…KPFN) and 321 to 360 (HNIA…HESF). The L/FRRG motif motif lies at 317-321 (LRRGH). A disordered region spans residues 360-380 (FEYEEDPANESDPDDEDRSSE). Residues 361 to 378 (EYEEDPANESDPDDEDRS) are compositionally biased toward acidic residues.

It belongs to the WD repeat PROPPIN family.

It localises to the cytoplasm. It is found in the membrane. The protein resides in the vacuole membrane. In terms of biological role, required for cytoplasm to vacuole transport (Cvt) vesicles formation and mitophagy. Involved in binding of phosphatidylethanolamine to ATG8 and in recruitment of ATG8 and ATG5 to the pre-autophagosomal structure. Protects ATG8 from ARG4-mediated cleavage. In Debaryomyces hansenii (strain ATCC 36239 / CBS 767 / BCRC 21394 / JCM 1990 / NBRC 0083 / IGC 2968) (Yeast), this protein is Autophagy-related protein 21 (ATG21).